Reading from the N-terminus, the 140-residue chain is MKMLKSLSLIPRIVSPFQKCYSTDLISLVGVPRVKISKGQNRYLLVNIHTHGFTKYGRVIVRGADVDNHLAIFDSILEELEPEGICAKILGGGRILNEPDNKKIKIYGTSRTFGGADHTRTRNILQAWTTYKDFKITVKQ.

Substrate is bound at residue Arg42. His69 (proton acceptor) is an active-site residue. Position 110 to 112 (110 to 112) interacts with substrate; that stretch reads SRT.

The protein belongs to the janus family.

In terms of biological role, janA and janB regulate somatic sex differentiation. This Drosophila sechellia (Fruit fly) protein is Sex-regulated protein janus-B (janB).